The sequence spans 1044 residues: Pre-mRNA-splicing factor ATP-dependent RNA helicase DEAH1 (1044 aa).

The segment at 106 to 206 (EVVVEKKSSV…TLSKKEKEEA (101 aa)) is disordered. Basic and acidic residues predominate over residues 108 to 121 (VVEKKSSVSESRKS). Residues 122 to 132 (DKGKKRFRKKS) are compositionally biased toward basic residues. Phosphoserine is present on residues Ser135 and Ser138. Acidic residues predominate over residues 157-166 (EEDDGSESEE). A compositionally biased stretch (basic and acidic residues) spans 167–206 (ERVRDQKEREELEQHLKDRDTARTRKLTEQTLSKKEKEEA). One can recognise a Helicase ATP-binding domain in the interval 414-577 (LKAVEEHQVL…FDTAPIFSFP (164 aa)). Residue 427–434 (GDTGSGKT) coordinates ATP. The DEAH box motif lies at 524–527 (DEAH). In terms of domain architecture, Helicase C-terminal spans 600–775 (IVTILTIHVR…SVVLALKSLG (176 aa)).

It belongs to the DEAD box helicase family. DEAH subfamily. PRP2 sub-subfamily. As to expression, widely expressed.

It catalyses the reaction ATP + H2O = ADP + phosphate + H(+). Functionally, involved in pre-mRNA splicing. This chain is Pre-mRNA-splicing factor ATP-dependent RNA helicase DEAH1, found in Arabidopsis thaliana (Mouse-ear cress).